Here is a 243-residue protein sequence, read N- to C-terminus: Pleckstrin homology domain-containing family B member 1 (243 aa).

The region spanning 21 to 128 is the PH domain; the sequence is ALVRGGWLWR…WKTALMEANS (108 aa).

As to quaternary structure, binds transducins. Homodimer. Interacts (via PH domain) with MYO1C. Interacts (via PH domain) with MYO7A. As to expression, highly expressed in retina and brain. In retina, abundantly expressed in photoreceptors. Isoform 4 is the predominant isoform expressed in mature olfactory receptor neurons and vestibular and cochlear hair cells. Also expressed in cells with possible sensory function, including peripheral retinal ganglion cells, cochlear interdental cells, and neurons of the circumventricular organ (at protein level).

It is found in the membrane. The protein localises to the cytoplasm. This chain is Pleckstrin homology domain-containing family B member 1 (Plekhb1), found in Mus musculus (Mouse).